The following is a 242-amino-acid chain: MSGFFITATDTEVGKTVVAGALAGVFRELGYNIGVYKPLQSGHVASNPEGDAARLKVLSGVPTKEDEICPYSIEEPLAPRLAMKRAGRAVTLKDIIHHYNERLKEFNSLFVEGAGGLAVPYTEDALVIDFAKELQLPLIVVARPTLGTVNHTVLTIAYAKAHGLTVAGVILSGCKECEMERVQENKVMIEELSGVPVLGLLPFFEGEFTKKEVLESAKEYIMISKLEEFIRNESTVAHTSSN.

ATP is bound at residue 12–17 (EVGKTV). T16 is a binding site for Mg(2+). K37 is an active-site residue. S41 is a binding site for substrate. Residues D51 and 112–115 (EGAG) contribute to the ATP site. D51 and E112 together coordinate Mg(2+).

It belongs to the dethiobiotin synthetase family. Homodimer. The cofactor is Mg(2+).

The protein resides in the cytoplasm. The enzyme catalyses (7R,8S)-7,8-diammoniononanoate + CO2 + ATP = (4R,5S)-dethiobiotin + ADP + phosphate + 3 H(+). Its pathway is cofactor biosynthesis; biotin biosynthesis; biotin from 7,8-diaminononanoate: step 1/2. Its function is as follows. Catalyzes a mechanistically unusual reaction, the ATP-dependent insertion of CO2 between the N7 and N8 nitrogen atoms of 7,8-diaminopelargonic acid (DAPA, also called 7,8-diammoniononanoate) to form a ureido ring. This Bacillus thuringiensis (strain Al Hakam) protein is ATP-dependent dethiobiotin synthetase BioD.